The following is a 1441-amino-acid chain: Protein cft1 (1441 aa).

The disordered stretch occupies residues 741–763 (DSASETDLDIQPNHKTSNNDQMG). Over residues 753 to 763 (NHKTSNNDQMG) the composition is skewed to polar residues.

It belongs to the CFT1 family.

It is found in the cytoplasm. Its subcellular location is the nucleus. Its function is as follows. RNA-binding component of the cleavage and polyadenylation factor (CPF) complex, which plays a key role in polyadenylation-dependent pre-mRNA 3'-end formation and cooperates with cleavage factors including the CFIA complex and NAB4/CFIB. Involved in poly(A) site recognition. May be involved in coupling transcription termination and mRNA 3'-end formation. In Schizosaccharomyces pombe (strain 972 / ATCC 24843) (Fission yeast), this protein is Protein cft1 (cft1).